We begin with the raw amino-acid sequence, 370 residues long: Mitogen-activated protein kinase 3 (370 aa).

A Protein kinase domain is found at 38 to 324; sequence RPPIIPIGRG…VEQALNHQYL (287 aa). Residues 44–52 and lysine 67 each bind ATP; that span reads IGRGAYGIV. Aspartate 164 functions as the Proton acceptor in the catalytic mechanism. Threonine 196 carries the phosphothreonine modification. Residues 196 to 198 carry the TXY motif; it reads TEY. Tyrosine 198 is subject to Phosphotyrosine. Phosphothreonine is present on threonine 201.

This sequence belongs to the protein kinase superfamily. CMGC Ser/Thr protein kinase family. MAP kinase subfamily. Interacts with DSPTP1B/MKP2, NDPK2 and VIP1. The interaction with DSPTP1B/MKP2 is repressed by fungal elicitation. Binds to LIP5. Interacts with VQ4. Interacts with RACK1A, RACK1B and RACK1C. Interacts with FLZ9. Interacts with MKK5. Post-translationally, dually phosphorylated on Thr-196 and Tyr-198, which activates the enzyme. Dephosphorylated by DSPTP1B/MKP2.

The protein localises to the cytoplasm. Its subcellular location is the nucleus. It is found in the cell cortex. The catalysed reaction is L-seryl-[protein] + ATP = O-phospho-L-seryl-[protein] + ADP + H(+). The enzyme catalyses L-threonyl-[protein] + ATP = O-phospho-L-threonyl-[protein] + ADP + H(+). Its activity is regulated as follows. Activated by threonine and tyrosine phosphorylation. Activated by MAP kinase kinases MKK4, MKK5, MKK7 and MKK9. Activated in response to hydrogen peroxide, ozone, salt stress and flagellin bacterial elicitor. Triggered by Agrobacterium upon T-DNA transfer. Repressed by DSPTP1B/MKP2-mediated dephosphorylation. Functionally, involved in oxidative stress-mediated signaling cascade (such as ozone). Involved in the innate immune MAP kinase signaling cascade (MEKK1, MKK4/MKK5 and MPK3/MPK6) downstream of bacterial flagellin receptor FLS2. May be involved in hypersensitive response (HR)-mediated signaling cascade by modulating LIP5 phosphorylation and subsequent multivesicular bodies (MVBs) trafficking. May phosphorylate regulators of WRKY transcription factors. Mediates the phosphorylation of VIP1 and subsequent stress genes transcription in response to Agrobacterium. MKK9-MPK3/MPK6 module phosphorylates and activates EIN3, leading to the promotion of EIN3-mediated transcription in ethylene signaling. MPK3/MPK6 cascade regulates camalexin synthesis through transcriptional regulation of the biosynthetic genes after pathogen infection. YDA-MKK4/MKK5-MPK3/MPK6 module regulates stomatal cell fate before the guard mother cell (GMC) is specified. When activated, reinforces the feedback loop by phosphorylating BASL, and inhibits stomatal fate by phosphorylating SPCH. This MAPK cascade also functions downstream of the ER receptor in regulating coordinated local cell proliferation, which shapes the morphology of plant organs. The polypeptide is Mitogen-activated protein kinase 3 (Arabidopsis thaliana (Mouse-ear cress)).